The chain runs to 465 residues: Pancreatic triacylglycerol lipase (465 aa).

An N-terminal signal peptide occupies residues 1-16; that stretch reads MLPLWTLSLLLGAVAG. Intrachain disulfides connect Cys-20/Cys-26 and Cys-107/Cys-118. The active-site Nucleophile is Ser-169. Residue Asn-183 is glycosylated (N-linked (GlcNAc...) asparagine). Asp-193 functions as the Charge relay system in the catalytic mechanism. Residues Glu-204, Arg-207, Asp-209, and Asp-212 each contribute to the Ca(2+) site. Cys-254 and Cys-278 form a disulfide bridge. His-280 serves as the catalytic Charge relay system. 3 disulfides stabilise this stretch: Cys-302–Cys-313, Cys-316–Cys-321, and Cys-449–Cys-465. A PLAT domain is found at 355 to 465; sequence WRYKVSVTLS…EEVLLTLTPC (111 aa).

It belongs to the AB hydrolase superfamily. Lipase family. In terms of assembly, forms a 1:1 stoichiometric complex with (pro)colipase/CLPS.

It is found in the secreted. It carries out the reaction a triacylglycerol + H2O = a diacylglycerol + a fatty acid + H(+). It catalyses the reaction 1,2,3-tributanoylglycerol + H2O = dibutanoylglycerol + butanoate + H(+). The enzyme catalyses 1,2,3-tri-(9Z-octadecenoyl)-glycerol + H2O = di-(9Z)-octadecenoylglycerol + (9Z)-octadecenoate + H(+). The catalysed reaction is all-trans-retinyl hexadecanoate + H2O = all-trans-retinol + hexadecanoate + H(+). It carries out the reaction 1,2-di-(9Z-octadecenoyl)-glycerol + H2O = (9Z-octadecenoyl)-glycerol + (9Z)-octadecenoate + H(+). Its activity is regulated as follows. Inhibited by bile salts, is reactivated by (pro)colipase/CLPS. Plays an important role in fat metabolism. It preferentially splits the esters of long-chain fatty acids at positions 1 and 3, producing mainly 2-monoacylglycerol and free fatty acids, and shows considerably higher activity against insoluble emulsified substrates than against soluble ones. The protein is Pancreatic triacylglycerol lipase of Homo sapiens (Human).